The following is a 233-amino-acid chain: Hydroxyacylglutathione hydrolase (233 aa).

The Zn(2+) site is built by histidine 52, histidine 54, aspartate 56, histidine 57, histidine 108, aspartate 125, and histidine 163.

It belongs to the metallo-beta-lactamase superfamily. Glyoxalase II family. Monomer. Zn(2+) is required as a cofactor.

It catalyses the reaction an S-(2-hydroxyacyl)glutathione + H2O = a 2-hydroxy carboxylate + glutathione + H(+). The protein operates within secondary metabolite metabolism; methylglyoxal degradation; (R)-lactate from methylglyoxal: step 2/2. Functionally, thiolesterase that catalyzes the hydrolysis of S-D-lactoyl-glutathione to form glutathione and D-lactic acid. The protein is Hydroxyacylglutathione hydrolase of Actinobacillus succinogenes (strain ATCC 55618 / DSM 22257 / CCUG 43843 / 130Z).